The following is a 1705-amino-acid chain: Receptor-type tyrosine-protein phosphatase V (1705 aa).

The signal sequence occupies residues 1–18 (MRPLILLAALLWLQDSLA). Over 19–1077 (QEDVCSSLDG…QASISLVAMP (1059 aa)) the chain is Extracellular. A disordered region spans residues 24–44 (SSLDGSPDRQGGGPPLSVSVT). Fibronectin type-III domains follow at residues 37–129 (PPLS…TAPT), 130–222 (VVRG…VPPD), 218–305 (PVPP…EWTY), 306–388 (PSYP…SIWL), 393–454 (ARPM…HYRV), 475–569 (PPQS…APPT), 565–654 (PAPP…TGWT), 655–749 (PPSA…TPNE), 744–831 (PLTP…VLSV), and 832–926 (EPGP…SAEV). Asparagine 74, asparagine 89, asparagine 117, asparagine 174, asparagine 239, asparagine 259, asparagine 299, asparagine 345, asparagine 431, asparagine 551, asparagine 570, asparagine 620, asparagine 649, asparagine 663, and asparagine 737 each carry an N-linked (GlcNAc...) asparagine glycan. Asparagine 851, asparagine 882, asparagine 970, and asparagine 982 each carry an N-linked (GlcNAc...) asparagine glycan. A helical membrane pass occupies residues 1078–1100 (LTVMMGTVVGCIIIVCAVLCLLC). Residues 1101-1705 (RRGLKGPRSE…LRNRLPRARK (605 aa)) are Cytoplasmic-facing. Tyrosine-protein phosphatase domains are found at residues 1150 to 1409 (FFQE…LLNK) and 1427 to 1695 (NFAQ…LNSA). Residues aspartate 1316, 1350–1356 (CSAGVGR), and glutamine 1394 each bind substrate. Catalysis depends on cysteine 1350, which acts as the Phosphocysteine intermediate.

Belongs to the protein-tyrosine phosphatase family. Receptor class 3 subfamily.

Its subcellular location is the membrane. It catalyses the reaction O-phospho-L-tyrosyl-[protein] + H2O = L-tyrosyl-[protein] + phosphate. In terms of biological role, protein tyrosine phosphatase that acts as a regulator of energy metabolism by mediating dephosphorylation of insulin receptor (Insr). Prevents decarboxylation of osteocalcin (Bglap and Bglap2) via an indirect mechanism: dephosphorylation of insulin receptor prevents insulin signaling-dependent decarboxylation of osteocalcin, preventing the hormone activity of osteocalcin. May play a role in the maintenance of pluripotency. This is Receptor-type tyrosine-protein phosphatase V (Ptprv) from Mus musculus (Mouse).